The chain runs to 66 residues: Phylloseptin-S3 (66 aa).

Positions 1–22 (MAFLKKSLFLVLFLGLVSLSIC) are cleaved as a signal peptide. A propeptide spanning residues 23-46 (EEEKRETEEEEHDQEEDDKSEEKR) is cleaved from the precursor. A disordered region spans residues 25 to 44 (EKRETEEEEHDQEEDDKSEE). Residues 30 to 41 (EEEEHDQEEDDK) are compositionally biased toward acidic residues. At Phe-65 the chain carries Phenylalanine amide.

Belongs to the frog skin active peptide (FSAP) family. Phylloseptin subfamily. In terms of tissue distribution, expressed by the skin glands.

It is found in the secreted. Its subcellular location is the target cell membrane. Antimicrobial peptide with activity against the Gram-positive S.pyogenes (MIC=12.5 uM), but not against all other bacteria tested (both Gram-positive and Gram-negative). Does not show activity against fungi, and against Leishmania species. The chain is Phylloseptin-S3 from Phyllomedusa sauvagei (Sauvage's leaf frog).